The following is a 564-amino-acid chain: MSNDEFSDNERLKQQSQLLRGTIKEDLHNELTGGFLGDNFQLIRFHGMYQQDDRDIRQERAAQMLEPLHTVMLRVRLPGGIISPQQWLGIDEFASQHTLYGSIRITNRQALQLHGVLKRNIKPVHRLLHQLGLDSRATAGDVNRNVLCTSNPVESRLHHQAYEWAKKISEHLLPKTNAYAEVWLDGEKIAQPEEEPILGNNYLPRKFKTAVVIPPQNDVDLHANDLNFIAIGDNGQLTGFNVLVGGGLAMTHGDQSTYPRLATELGYIPLNATLAVATAVVATQRDLGNRANRRNAKTKYTIDRLGIEVFKAEVELRAGLAFQPLRPYAFSSRGDRIGWVEGIDGKHHLTLFIPSGRLIDKPGKPLKSGLAAIAAVHTGDFRLTPNQNIIIAGVSERNRAQIDALAQRYSLIDDTVSPQRKSAMACVSYPTCPLAMAEAERVLPDIVDRLDAILIRNGIADRDVIFRVTGCPNGCGRAMLAEIGLVGRAVGRYDIYLGGNREGTRIPRLYKENQPLEEIIRDLDALLSAWAQADNPDEAFGDFAIQTGIIRPVLNSSIDFYLQD.

4 residues coordinate [4Fe-4S] cluster: C426, C432, C471, and C475. C475 lines the siroheme pocket.

This sequence belongs to the nitrite and sulfite reductase 4Fe-4S domain family. Alpha(8)-beta(8). The alpha component is a flavoprotein, the beta component is a hemoprotein. Siroheme serves as cofactor. The cofactor is [4Fe-4S] cluster.

The catalysed reaction is hydrogen sulfide + 3 NADP(+) + 3 H2O = sulfite + 3 NADPH + 4 H(+). The protein operates within sulfur metabolism; hydrogen sulfide biosynthesis; hydrogen sulfide from sulfite (NADPH route): step 1/1. Component of the sulfite reductase complex that catalyzes the 6-electron reduction of sulfite to sulfide. This is one of several activities required for the biosynthesis of L-cysteine from sulfate. This is Sulfite reductase [NADPH] hemoprotein beta-component 2 from Klebsiella pneumoniae (strain 342).